A 321-amino-acid chain; its full sequence is MSKPIQIERGVKYRDADKMALIPVRTVVTERQEILRKPEWMKIKLPADSSRIQGIKAAMRKNGLHSVCEEASCPNLAECFNHGTATFMILGAICTRRCPFCDVAHGRPLTPDANEPEKLAQTIHDMGLRYVVITSVDRDDLRDGGAQHFADCISAIRRKNPNIRIETLVPDFRGRMDRALEILTATPPDVFNHNLENVPRVYRQVRPGANYEWSLKLLENFKNAHPDIPTKSGLMVGLGETNAEIVDVMRDLRRHGVTMLTLGQYLQPSRHHLPVQRYVSPDEFDEMKAEAIAMGFTHAACGPFVRSSYHADLQAKGIEVK.

[4Fe-4S] cluster contacts are provided by Cys-68, Cys-73, Cys-79, Cys-94, Cys-98, Cys-101, and Ser-308. The Radical SAM core domain maps to Phe-80–Thr-297.

Belongs to the radical SAM superfamily. Lipoyl synthase family. [4Fe-4S] cluster is required as a cofactor.

The protein localises to the cytoplasm. It catalyses the reaction [[Fe-S] cluster scaffold protein carrying a second [4Fe-4S](2+) cluster] + N(6)-octanoyl-L-lysyl-[protein] + 2 oxidized [2Fe-2S]-[ferredoxin] + 2 S-adenosyl-L-methionine + 4 H(+) = [[Fe-S] cluster scaffold protein] + N(6)-[(R)-dihydrolipoyl]-L-lysyl-[protein] + 4 Fe(3+) + 2 hydrogen sulfide + 2 5'-deoxyadenosine + 2 L-methionine + 2 reduced [2Fe-2S]-[ferredoxin]. It participates in protein modification; protein lipoylation via endogenous pathway; protein N(6)-(lipoyl)lysine from octanoyl-[acyl-carrier-protein]: step 2/2. In terms of biological role, catalyzes the radical-mediated insertion of two sulfur atoms into the C-6 and C-8 positions of the octanoyl moiety bound to the lipoyl domains of lipoate-dependent enzymes, thereby converting the octanoylated domains into lipoylated derivatives. In Pectobacterium carotovorum subsp. carotovorum (strain PC1), this protein is Lipoyl synthase.